A 257-amino-acid polypeptide reads, in one-letter code: Imidazole glycerol phosphate synthase subunit HisF (257 aa).

Active-site residues include Asp12 and Asp131.

This sequence belongs to the HisA/HisF family. As to quaternary structure, heterodimer of HisH and HisF.

It is found in the cytoplasm. It catalyses the reaction 5-[(5-phospho-1-deoxy-D-ribulos-1-ylimino)methylamino]-1-(5-phospho-beta-D-ribosyl)imidazole-4-carboxamide + L-glutamine = D-erythro-1-(imidazol-4-yl)glycerol 3-phosphate + 5-amino-1-(5-phospho-beta-D-ribosyl)imidazole-4-carboxamide + L-glutamate + H(+). Its pathway is amino-acid biosynthesis; L-histidine biosynthesis; L-histidine from 5-phospho-alpha-D-ribose 1-diphosphate: step 5/9. Functionally, IGPS catalyzes the conversion of PRFAR and glutamine to IGP, AICAR and glutamate. The HisF subunit catalyzes the cyclization activity that produces IGP and AICAR from PRFAR using the ammonia provided by the HisH subunit. In Burkholderia ambifaria (strain MC40-6), this protein is Imidazole glycerol phosphate synthase subunit HisF.